We begin with the raw amino-acid sequence, 445 residues long: Tubulin beta chain (445 aa).

Residues 1 to 4 (MREI) carry the MREI motif motif. GTP is bound at residue Gln-11. Ser-40 carries the post-translational modification Phosphoserine. Lys-58 carries the N6-acetyllysine; alternate modification. Lys-58 carries the N6-succinyllysine; alternate modification. A Glycyl lysine isopeptide (Lys-Gly) (interchain with G-Cter in ubiquitin); alternate cross-link involves residue Lys-58. The GTP site is built by Glu-69, Ser-138, Gly-142, Thr-143, and Gly-144. Glu-69 contacts Mg(2+). Ser-172 bears the Phosphoserine; by CDK1 mark. 2 residues coordinate GTP: Asn-204 and Asn-226. Residues Thr-285 and Thr-290 each carry the phosphothreonine modification. Position 318 is an omega-N-methylarginine (Arg-318). Lys-324 is covalently cross-linked (Glycyl lysine isopeptide (Lys-Gly) (interchain with G-Cter in ubiquitin)). Residues 424–445 (QYQDATADEQGEFEEEGEEDEA) are disordered. Positions 429–445 (TADEQGEFEEEGEEDEA) are enriched in acidic residues. Residue Glu-438 is modified to 5-glutamyl polyglutamate.

The protein belongs to the tubulin family. In terms of assembly, dimer of alpha and beta chains. A typical microtubule is a hollow water-filled tube with an outer diameter of 25 nm and an inner diameter of 15 nM. Alpha-beta heterodimers associate head-to-tail to form protofilaments running lengthwise along the microtubule wall with the beta-tubulin subunit facing the microtubule plus end conferring a structural polarity. Microtubules usually have 13 protofilaments but different protofilament numbers can be found in some organisms and specialized cells. Interacts with NCKAP5L. It depends on Mg(2+) as a cofactor. In terms of processing, some glutamate residues at the C-terminus are polyglycylated, resulting in polyglycine chains on the gamma-carboxyl group. Glycylation is mainly limited to tubulin incorporated into axonemes (cilia and flagella) whereas glutamylation is prevalent in neuronal cells, centrioles, axonemes, and the mitotic spindle. Both modifications can coexist on the same protein on adjacent residues, and lowering polyglycylation levels increases polyglutamylation, and reciprocally. Cilia and flagella glycylation is required for their stability and maintenance. Flagella glycylation controls sperm motility. Some glutamate residues at the C-terminus are polyglutamylated, resulting in polyglutamate chains on the gamma-carboxyl group. Polyglutamylation plays a key role in microtubule severing by spastin (SPAST). SPAST preferentially recognizes and acts on microtubules decorated with short polyglutamate tails: severing activity by SPAST increases as the number of glutamates per tubulin rises from one to eight, but decreases beyond this glutamylation threshold. Post-translationally, phosphorylated on Ser-172 by CDK1 during the cell cycle, from metaphase to telophase, but not in interphase. This phosphorylation inhibits tubulin incorporation into microtubules.

The protein resides in the cytoplasm. It localises to the cytoskeleton. Its function is as follows. Tubulin is the major constituent of microtubules, a cylinder consisting of laterally associated linear protofilaments composed of alpha- and beta-tubulin heterodimers. Microtubules grow by the addition of GTP-tubulin dimers to the microtubule end, where a stabilizing cap forms. Below the cap, tubulin dimers are in GDP-bound state, owing to GTPase activity of alpha-tubulin. This chain is Tubulin beta chain, found in Sus scrofa (Pig).